The primary structure comprises 770 residues: Protein argonaute (770 aa).

The segment at 1–151 (MKAKVVINLV…VIHIIHQIQS (151 aa)) is N-terminal domain. Residues 154–272 (TLWELVNKDP…LLPQLVVPTY (119 aa)) form the PAZ domain. Residues 276-361 (QLESDVAKEI…SQLLLWTNYS (86 aa)) form an interdomain connector region. A mid domain region spans residues 362-544 (RKYPVILPYE…LSKLGVKYYV (183 aa)). One can recognise a Piwi domain in the interval 473-756 (GLAFIAARNK…FANAIRNEWK (284 aa)). Catalysis depends on residues D558, E596, D628, and H745. D558 is a binding site for Mn(2+). Positions 628, 745, and 770 each coordinate Mn(2+).

The protein belongs to the argonaute family. Long pAgo subfamily. In terms of assembly, monomer. Mn(2+) serves as cofactor.

Its activity is regulated as follows. Inhibited at greater than 500 mM NaCl. Functionally, a DNA-guided ssDNA endonuclease that may play a role in defense against invading mobile genetic elements. Uses short 5'-phospho-ssDNA sequences as guides (gDNA) to bind complementary target strands, resulting in cleavage of the target DNA (tDNA). Endonucleolytically cleaves DNA in short dsDNA (the gDNA indicates where to cleave on the tDNA). Efficient guide-dependent target DNA cleavage requires a minimal gDNA length of 15 nucleotides (nt) and works up to at least 31 nt. Overexpression decreases plasmid transformation efficiency. Has no appreciable activity with gRNA or on target RNA. Also has guide-independent activity on plasmid DNA called 'chopping'. The cleavage site is 10 nucleotides (nt) downstream of the target residue base-paired with the 5'-end of the gDNA, cleavage is insensitive to adenine methylation. DNA cleavage produces 5'-phosphomonoesters (as it can be ligated by T4 DNA ligase). In Pyrococcus furiosus (strain ATCC 43587 / DSM 3638 / JCM 8422 / Vc1), this protein is Protein argonaute.